A 442-amino-acid chain; its full sequence is Exodeoxyribonuclease 7 large subunit (442 aa).

It belongs to the XseA family. Heterooligomer composed of large and small subunits.

The protein localises to the cytoplasm. The catalysed reaction is Exonucleolytic cleavage in either 5'- to 3'- or 3'- to 5'-direction to yield nucleoside 5'-phosphates.. Its function is as follows. Bidirectionally degrades single-stranded DNA into large acid-insoluble oligonucleotides, which are then degraded further into small acid-soluble oligonucleotides. The sequence is that of Exodeoxyribonuclease 7 large subunit from Shewanella woodyi (strain ATCC 51908 / MS32).